Consider the following 305-residue polypeptide: Superkiller complex protein 8 (305 aa).

At Met1 the chain carries N-acetylmethionine. Position 2 is an N-acetylthreonine; in WD repeat-containing protein 61, N-terminally processed (Thr2). WD repeat units follow at residues Ala14 to Gln57, Gly62 to Ser101, Ala104 to Ser143, Thr146 to Glu187, Gly188 to Thr227, Gly230 to Thr269, and Asp272 to Ile305.

It belongs to the SKI8 family. As to quaternary structure, component of the PAF1 complex, which consists of CDC73, PAF1, LEO1, CTR9, RTF1 and SKIC8. The PAF1 complex interacts with PHF5A. Within the PAF1 complex interacts directly with PHF5A. Component of the SKI complex which consists of SKIC2, SKIC3 and SKIC8.

Its subcellular location is the nucleus. The protein resides in the cytoplasm. Its function is as follows. Component of the PAF1 complex (PAF1C) which has multiple functions during transcription by RNA polymerase II and is implicated in regulation of development and maintenance of embryonic stem cell pluripotency. PAF1C associates with RNA polymerase II through interaction with POLR2A CTD non-phosphorylated and 'Ser-2'- and 'Ser-5'-phosphorylated forms and is involved in transcriptional elongation, acting both independently and synergistically with TCEA1 and in cooperation with the DSIF complex and HTATSF1. PAF1C is required for transcription of Hox and Wnt target genes. PAF1C is involved in hematopoiesis and stimulates transcriptional activity of KMT2A/MLL1; it promotes leukemogenesis through association with KMT2A/MLL1-rearranged oncoproteins, such as KMT2A/MLL1-MLLT3/AF9 and KMT2A/MLL1-MLLT1/ENL. PAF1C is involved in histone modifications such as ubiquitination of histone H2B and methylation on histone H3 'Lys-4' (H3K4me3). PAF1C recruits the RNF20/40 E3 ubiquitin-protein ligase complex and the E2 enzyme UBE2A or UBE2B to chromatin which mediate monoubiquitination of 'Lys-120' of histone H2B (H2BK120ub1); UB2A/B-mediated H2B ubiquitination is proposed to be coupled to transcription. PAF1C is involved in mRNA 3' end formation probably through association with cleavage and poly(A) factors. In case of infection by influenza A strain H3N2, PAF1C associates with viral NS1 protein, thereby regulating gene transcription. Required for mono- and trimethylation on histone H3 'Lys-4' (H3K4me3), dimethylation on histone H3 'Lys-79' (H3K4me3). Required for Hox gene transcription. Also acts as a component of the SKI complex, a multiprotein complex that assists the RNA-degrading exosome during the mRNA decay and quality-control pathways. The SKI complex catalyzes mRNA extraction from 80S ribosomal complexes in the 3'-5' direction and channels mRNA to the cytosolic exosome for degradation. SKI-mediated extraction of mRNA from stalled ribosomes allow binding of the Pelota-HBS1L complex and subsequent ribosome disassembly by ABCE1 for ribosome recycling. In Rattus norvegicus (Rat), this protein is Superkiller complex protein 8 (Skic8).